We begin with the raw amino-acid sequence, 130 residues long: Small ribosomal subunit protein uS9 (130 aa).

Positions 108 to 130 (SREKERKKYGQRGARARFQYSKR) are disordered.

This sequence belongs to the universal ribosomal protein uS9 family.

The chain is Small ribosomal subunit protein uS9 from Solidesulfovibrio magneticus (strain ATCC 700980 / DSM 13731 / RS-1) (Desulfovibrio magneticus).